We begin with the raw amino-acid sequence, 567 residues long: Urease subunit alpha (567 aa).

The region spanning 129–567 (GGIDTHIHWI…LPMAQRYFLF (439 aa)) is the Urease domain. 3 residues coordinate Ni(2+): histidine 134, histidine 136, and lysine 217. Residue lysine 217 is modified to N6-carboxylysine. Histidine 219 contacts substrate. Residues histidine 246 and histidine 272 each contribute to the Ni(2+) site. The active-site Proton donor is the histidine 320. Aspartate 360 contacts Ni(2+).

This sequence belongs to the metallo-dependent hydrolases superfamily. Urease alpha subunit family. In terms of assembly, heterotrimer of UreA (gamma), UreB (beta) and UreC (alpha) subunits. Three heterotrimers associate to form the active enzyme. The apoenzyme interacts with an accessory complex composed of UreD, UreF and UreG, which is required for the assembly of the nickel containing metallocenter of UreC. The UreE protein may also play a direct role as a metallochaperone in nickel transfer to the urease apoprotein. Requires Ni cation as cofactor. Post-translationally, carboxylation allows a single lysine to coordinate two nickel ions.

The protein localises to the cytoplasm. It carries out the reaction urea + 2 H2O + H(+) = hydrogencarbonate + 2 NH4(+). It participates in nitrogen metabolism; urea degradation; CO(2) and NH(3) from urea (urease route): step 1/1. The apoenzyme can be activated in vitro in the presence of nickel ions and carbon dioxide, which promotes carboxylation of Lys-217. This Klebsiella aerogenes (Enterobacter aerogenes) protein is Urease subunit alpha.